A 148-amino-acid polypeptide reads, in one-letter code: Lipoprotein signal peptidase (148 aa).

2 helical membrane passes run 57–77 and 88–105; these read VLLV…FIKY and VSFI…RIFY. Active-site residues include Asp110 and Asp129. A helical membrane pass occupies residues 124-144; that stretch reads TFNIADILVVVGTIMLAIFLL.

This sequence belongs to the peptidase A8 family.

It localises to the cell membrane. The enzyme catalyses Release of signal peptides from bacterial membrane prolipoproteins. Hydrolyzes -Xaa-Yaa-Zaa-|-(S,diacylglyceryl)Cys-, in which Xaa is hydrophobic (preferably Leu), and Yaa (Ala or Ser) and Zaa (Gly or Ala) have small, neutral side chains.. It participates in protein modification; lipoprotein biosynthesis (signal peptide cleavage). Functionally, this protein specifically catalyzes the removal of signal peptides from prolipoproteins. The protein is Lipoprotein signal peptidase of Clostridium novyi (strain NT).